The following is a 582-amino-acid chain: Aspartate--tRNA ligase (582 aa).

An L-aspartate-binding site is contributed by Glu-174. The aspartate stretch occupies residues 198-201; that stretch reads QITK. Arg-220 contacts L-aspartate. Residues 220 to 222 and Gln-229 contribute to the ATP site; that span reads RDE. An L-aspartate-binding site is contributed by His-443. Glu-477 contributes to the ATP binding site. Arg-484 lines the L-aspartate pocket. 529 to 532 provides a ligand contact to ATP; sequence GLDR.

It belongs to the class-II aminoacyl-tRNA synthetase family. Type 1 subfamily. Homodimer.

The protein localises to the cytoplasm. It catalyses the reaction tRNA(Asp) + L-aspartate + ATP = L-aspartyl-tRNA(Asp) + AMP + diphosphate. Its function is as follows. Catalyzes the attachment of L-aspartate to tRNA(Asp) in a two-step reaction: L-aspartate is first activated by ATP to form Asp-AMP and then transferred to the acceptor end of tRNA(Asp). The sequence is that of Aspartate--tRNA ligase from Streptococcus pyogenes serotype M18 (strain MGAS8232).